Here is a 469-residue protein sequence, read N- to C-terminus: Phosphoenolpyruvate carboxylase (469 aa).

This sequence belongs to the PEPCase type 2 family. In terms of assembly, homotetramer. It depends on Mg(2+) as a cofactor.

It catalyses the reaction oxaloacetate + phosphate = phosphoenolpyruvate + hydrogencarbonate. In terms of biological role, catalyzes the irreversible beta-carboxylation of phosphoenolpyruvate (PEP) to form oxaloacetate (OAA), a four-carbon dicarboxylic acid source for the tricarboxylic acid cycle. This chain is Phosphoenolpyruvate carboxylase, found in Pyrococcus horikoshii (strain ATCC 700860 / DSM 12428 / JCM 9974 / NBRC 100139 / OT-3).